A 236-amino-acid polypeptide reads, in one-letter code: Phosphoribosylaminoimidazole-succinocarboxamide synthase (236 aa).

Belongs to the SAICAR synthetase family.

The catalysed reaction is 5-amino-1-(5-phospho-D-ribosyl)imidazole-4-carboxylate + L-aspartate + ATP = (2S)-2-[5-amino-1-(5-phospho-beta-D-ribosyl)imidazole-4-carboxamido]succinate + ADP + phosphate + 2 H(+). Its pathway is purine metabolism; IMP biosynthesis via de novo pathway; 5-amino-1-(5-phospho-D-ribosyl)imidazole-4-carboxamide from 5-amino-1-(5-phospho-D-ribosyl)imidazole-4-carboxylate: step 1/2. This Streptococcus equi subsp. zooepidemicus (strain H70) protein is Phosphoribosylaminoimidazole-succinocarboxamide synthase.